Consider the following 257-residue polypeptide: Zinc uptake system ATP-binding protein ZurA (257 aa).

Positions 5-241 constitute an ABC transporter domain; that stretch reads IEVNNVSYHY…ADRELEILAE (237 aa). 37-44 provides a ligand contact to ATP; it reads GPNGSGKS.

Belongs to the ABC transporter superfamily.

In terms of biological role, involved in a zinc uptake transport system. This Listeria innocua serovar 6a (strain ATCC BAA-680 / CLIP 11262) protein is Zinc uptake system ATP-binding protein ZurA (zurA).